The chain runs to 293 residues: AKT-interacting protein (293 aa).

Over residues 1 to 11 the composition is skewed to polar residues; it reads MNPFWSMSTNA. The tract at residues 1–44 is disordered; sequence MNPFWSMSTNAGRKRSDGEEQSGSGEQRASPARPPFGKKQLPSI. The region spanning 75–223 is the UBC core domain; the sequence is YLEYSLLAEF…VVDSVKLCNS (149 aa). The disordered stretch occupies residues 260–293; sequence RPEDFNKGLPVSGLSWVKPGSTQPFSKEDNPLQT.

The protein belongs to the ubiquitin-conjugating enzyme family. FTS subfamily.

Its subcellular location is the cytoplasm. It is found in the cell membrane. In terms of biological role, may function to promote vesicle trafficking and/or fusion. May also regulate apoptosis. This Danio rerio (Zebrafish) protein is AKT-interacting protein (aktip).